The chain runs to 210 residues: Chorismate pyruvate-lyase (210 aa).

This sequence belongs to the chorismate pyruvate-lyase type 2 family.

The enzyme catalyses chorismate = 4-hydroxybenzoate + pyruvate. Removes the pyruvyl group from chorismate to provide 4-hydroxybenzoate (4HB). Involved in the synthesis of glycosylated p-hydroxybenzoic acid methyl esters (p-HBADs) and phenolic glycolipids (PGL) that play important roles in the pathogenesis of mycobacterial infections. The protein is Chorismate pyruvate-lyase of Mycobacterium leprae (strain TN).